We begin with the raw amino-acid sequence, 123 residues long: NADH-quinone oxidoreductase subunit A (123 aa).

The next 3 helical transmembrane spans lie at phenylalanine 11–glycine 31, leucine 67–valine 87, and isoleucine 92–alanine 112.

This sequence belongs to the complex I subunit 3 family. In terms of assembly, NDH-1 is composed of 14 different subunits. Subunits NuoA, H, J, K, L, M, N constitute the membrane sector of the complex.

It localises to the cell inner membrane. The catalysed reaction is a quinone + NADH + 5 H(+)(in) = a quinol + NAD(+) + 4 H(+)(out). Functionally, NDH-1 shuttles electrons from NADH, via FMN and iron-sulfur (Fe-S) centers, to quinones in the respiratory chain. The immediate electron acceptor for the enzyme in this species is believed to be ubiquinone. Couples the redox reaction to proton translocation (for every two electrons transferred, four hydrogen ions are translocated across the cytoplasmic membrane), and thus conserves the redox energy in a proton gradient. The chain is NADH-quinone oxidoreductase subunit A from Paraburkholderia phymatum (strain DSM 17167 / CIP 108236 / LMG 21445 / STM815) (Burkholderia phymatum).